Reading from the N-terminus, the 99-residue chain is DNA-directed RNA polymerase subunit omega (99 aa).

Belongs to the RNA polymerase subunit omega family. In terms of assembly, the RNAP catalytic core consists of 2 alpha, 1 beta, 1 beta' and 1 omega subunit. When a sigma factor is associated with the core the holoenzyme is formed, which can initiate transcription.

The enzyme catalyses RNA(n) + a ribonucleoside 5'-triphosphate = RNA(n+1) + diphosphate. Functionally, promotes RNA polymerase assembly. Latches the N- and C-terminal regions of the beta' subunit thereby facilitating its interaction with the beta and alpha subunits. The protein is DNA-directed RNA polymerase subunit omega (rpoZ) of Xylella fastidiosa (strain 9a5c).